A 357-amino-acid polypeptide reads, in one-letter code: Protein pelota homolog (357 aa).

Belongs to the eukaryotic release factor 1 family. Pelota subfamily. Monomer. A divalent metal cation serves as cofactor.

It localises to the cytoplasm. In terms of biological role, may function in recognizing stalled ribosomes, interact with stem-loop structures in stalled mRNA molecules, and effect endonucleolytic cleavage of the mRNA. May play a role in the release non-functional ribosomes and degradation of damaged mRNAs. Has endoribonuclease activity. This is Protein pelota homolog from Methanocella arvoryzae (strain DSM 22066 / NBRC 105507 / MRE50).